The following is a 72-amino-acid chain: Large ribosomal subunit protein bL31 (72 aa).

Positions 16, 18, 38, and 41 each coordinate Zn(2+).

The protein belongs to the bacterial ribosomal protein bL31 family. Type A subfamily. In terms of assembly, part of the 50S ribosomal subunit. The cofactor is Zn(2+).

Binds the 23S rRNA. The sequence is that of Large ribosomal subunit protein bL31 from Aromatoleum aromaticum (strain DSM 19018 / LMG 30748 / EbN1) (Azoarcus sp. (strain EbN1)).